A 180-amino-acid chain; its full sequence is MQKIQFILGILAAASSSATLAYDGKITFNGKVVDQTCSVTTESKNLTVKLPTVSANSLASSGKVVGLTPFTILLEGCNTPAVTGAQNVNAYFEPNANTDYTTGNLTNTASSGASNVQIQLLNADGVKAIKLGQAAAAQSVDTVAINDANVTLRYNAQYYATGVATAGDVTSTVNYTIAYQ.

Positions 1–21 are cleaved as a signal peptide; that stretch reads MQKIQFILGILAAASSSATLA. A disulfide bridge connects residues C37 and C77.

The protein belongs to the fimbrial protein family.

The protein localises to the fimbrium. Its function is as follows. Fimbriae (also called pili), polar filaments radiating from the surface of the bacterium to a length of 0.5-1.5 micrometers and numbering 100-300 per cell, enable bacteria to colonize the epithelium of specific host organs. The polypeptide is F17 fimbrial protein (F17a-A) (Escherichia coli).